Reading from the N-terminus, the 754-residue chain is Deadenylation-dependent mRNA-decapping factor pdc2 (754 aa).

Residues 499 to 754 (LESIWKALYI…MGLDARQLSA (256 aa)) are interaction with lsm1.

It belongs to the PAT1 family. In terms of assembly, interacts with dcp2. Interacts with lsm1; via C-terminus.

It localises to the cytoplasm. It is found in the nucleus. The protein localises to the P-body. Activator of decapping that functions as a general and active mechanism of translational repression and required for P-body formation. Stabilizes the 3' terminus of mRNAs and modulates the rates of mRNA-decapping that occur following deadenylation. Might be required for promoting the formation or the stabilization of the preinitiation translation complexes. Necessary for accurate chromosome transmission during cell division. Together with lsm1, recruits the deadenylase ccr4 to P-bodies. The sequence is that of Deadenylation-dependent mRNA-decapping factor pdc2 from Schizosaccharomyces pombe (strain 972 / ATCC 24843) (Fission yeast).